The following is a 356-amino-acid chain: sn-glycerol-3-phosphate import ATP-binding protein UgpC (356 aa).

One can recognise an ABC transporter domain in the interval 4–235 (LKLQAVTKSW…PASLFVASFI (232 aa)). 37–44 (GPSGCGKS) lines the ATP pocket.

It belongs to the ABC transporter superfamily. sn-glycerol-3-phosphate importer (TC 3.A.1.1.3) family. As to quaternary structure, the complex is composed of two ATP-binding proteins (UgpC), two transmembrane proteins (UgpA and UgpE) and a solute-binding protein (UgpB).

It is found in the cell inner membrane. The catalysed reaction is sn-glycerol 3-phosphate(out) + ATP + H2O = sn-glycerol 3-phosphate(in) + ADP + phosphate + H(+). Part of the ABC transporter complex UgpBAEC involved in sn-glycerol-3-phosphate (G3P) import. Responsible for energy coupling to the transport system. In Escherichia coli (strain UTI89 / UPEC), this protein is sn-glycerol-3-phosphate import ATP-binding protein UgpC.